Reading from the N-terminus, the 72-residue chain is GFYFRSIQGFYFKRIQGNICSEPKKVGRCRRSFPRFYFDSETGKCTPFIYGGCGGNGNNFETLHACRAICRA.

An N-terminal signal peptide occupies residues 1-9 (GFYFRSIQG). The propeptide occupies 10-16 (FYFKRIQ). Residues 20 to 70 (CSEPKKVGRCRRSFPRFYFDSETGKCTPFIYGGCGGNGNNFETLHACRAIC) form the BPTI/Kunitz inhibitor domain. Cystine bridges form between cysteine 20–cysteine 70, cysteine 29–cysteine 53, and cysteine 45–cysteine 66.

It belongs to the venom Kunitz-type family. Sea anemone type 2 potassium channel toxin subfamily.

It localises to the nematocyst. The protein localises to the secreted. Functionally, serine protease inhibitor that also shows protective effect in a cytotoxicity model. It inhibits the serine protease trypsin (Ki=630 nM). It significantly increases neuroblastoma cell viability in an in vitro neurotoxicity model, being a consequence of an effective decrease of reactive oxygen species (ROS) level in the cells. It also seems to protect cells by inhibiting ATP-induced purinoceptor (P2RX7) activation. The protein is PI-stichotoxin-Hcr2k of Radianthus crispa (Leathery sea anemone).